Here is a 347-residue protein sequence, read N- to C-terminus: NADH-ubiquinone oxidoreductase chain 2 (347 aa).

11 helical membrane-spanning segments follow: residues 3-23 (PLIFTMIMLTVILGTTIVMMS), 25-45 (HWLMIWMGFEMNMLAVIPLLM), 59-79 (YFLTQATASMLLMLAVIINLL), 96-116 (IIMTLALGMKMGLAPFHFWVP), 122-144 (ISLSSGLILLTWQKLAPLSVLYV), 149-171 (INLDLILLMSMMSIAIGGWGGLN), 178-198 (ILAYSSIAHMGWMASILVFNP), 202-222 (LLNLLLYILMTTTTFMLFMVA), 247-267 (IMLSLGGLPPLTGFLPKWMII), 276-296 (ITLATLMAITALLNLFFYMRL), and 326-346 (LPVLIILSTITLPLAPAITLL).

This sequence belongs to the complex I subunit 2 family. Core subunit of respiratory chain NADH dehydrogenase (Complex I) which is composed of 45 different subunits. Interacts with TMEM242.

It localises to the mitochondrion inner membrane. The catalysed reaction is a ubiquinone + NADH + 5 H(+)(in) = a ubiquinol + NAD(+) + 4 H(+)(out). Its function is as follows. Core subunit of the mitochondrial membrane respiratory chain NADH dehydrogenase (Complex I) which catalyzes electron transfer from NADH through the respiratory chain, using ubiquinone as an electron acceptor. Essential for the catalytic activity and assembly of complex I. The protein is NADH-ubiquinone oxidoreductase chain 2 of Saccopteryx bilineata (Greater white-lined bat).